The chain runs to 496 residues: Angiopoietin-2 (496 aa).

A signal peptide spans 1-18 (MWQIVFFTLSCDLVLAAA). N-linked (GlcNAc...) asparagine glycans are attached at residues Asn89, Asn119, Asn133, Asn151, Asn240, and Asn304. Residues 166 to 248 (STNKLEKQIL…VNNSVLQKQQ (83 aa)) are a coiled coil. Residues 275–495 (KEEQISFRDC…ATTMMIRPAD (221 aa)) enclose the Fibrinogen C-terminal domain. Cys284 and Cys313 are oxidised to a cystine. Residues Asp429, Asp431, Cys433, and Cys435 each contribute to the Ca(2+) site. 2 disulfides stabilise this stretch: Cys433/Cys435 and Cys437/Cys450.

Interacts with TEK/TIE2, competing for the same binding site as ANGPT1. Interacts with ITGA5. Interacts with SVEP1/polydom. Interacts with THBD; this interaction significantly inhibits the generation of activated PC and TAFIa/CPB2 by the thrombin/thrombomodulin complex.

It is found in the secreted. Functionally, binds to TEK/TIE2, competing for the ANGPT1 binding site, and modulating ANGPT1 signaling. Can induce tyrosine phosphorylation of TEK/TIE2 in the absence of ANGPT1. In the absence of angiogenic inducers, such as VEGF, ANGPT2-mediated loosening of cell-matrix contacts may induce endothelial cell apoptosis with consequent vascular regression. In concert with VEGF, it may facilitate endothelial cell migration and proliferation, thus serving as a permissive angiogenic signal. Involved in the regulation of lymphangiogenesis. The sequence is that of Angiopoietin-2 (ANGPT2) from Homo sapiens (Human).